Here is a 295-residue protein sequence, read N- to C-terminus: Iron-sulfur cluster carrier protein (295 aa).

38–45 (GKGGVGKS) serves as a coordination point for ATP.

The protein belongs to the Mrp/NBP35 ATP-binding proteins family. As to quaternary structure, homodimer.

Binds and transfers iron-sulfur (Fe-S) clusters to target apoproteins. Can hydrolyze ATP. This is Iron-sulfur cluster carrier protein from Pyrococcus furiosus (strain ATCC 43587 / DSM 3638 / JCM 8422 / Vc1).